A 261-amino-acid chain; its full sequence is Phosphonates import ATP-binding protein PhnC (261 aa).

The ABC transporter domain occupies 9–253; the sequence is IQLKDVSKIY…VFDDIYNGGN (245 aa). Residue 42 to 49 coordinates ATP; the sequence is GLSGAGKS.

Belongs to the ABC transporter superfamily. Phosphonates importer (TC 3.A.1.9.1) family. As to quaternary structure, the complex is composed of two ATP-binding proteins (PhnC), two transmembrane proteins (PhnE) and a solute-binding protein (PhnD).

It is found in the cell membrane. The catalysed reaction is phosphonate(out) + ATP + H2O = phosphonate(in) + ADP + phosphate + H(+). Part of the ABC transporter complex PhnCDE involved in phosphonates import. Responsible for energy coupling to the transport system. This is Phosphonates import ATP-binding protein PhnC from Lactobacillus gasseri (strain ATCC 33323 / DSM 20243 / BCRC 14619 / CIP 102991 / JCM 1131 / KCTC 3163 / NCIMB 11718 / NCTC 13722 / AM63).